Consider the following 333-residue polypeptide: MWSCGPLNSTAWAEEPLCRNLRLGLWVLSLLYLGAGVPVSLGYNALLVLANLASKNTMTMPDVYFVNMAVAGLVLTALAPAYLLGPAHSRWALWSLSSEAHVTLLILFNVASLVTMYSTALLSLDYYIERALPRTYMASVYNTRHVCGFVWGGAVLTSFSSLLFYICSHVSSRIAECARMQNTEAADAILVLIGYVVPGLAVLYALALISRIGKEDTPLDQDTSRLDPSVHRLLVATVCTQFGLWTPYYLSLGHTVLTSRGRTVEGHYLGILQVAKDLAKFLAFSSSSVTPLLYRYINKAFPGKLRRLMKKMHCGRRHCSPDPSGIQQVMAQA.

Over 1–22 (MWSCGPLNSTAWAEEPLCRNLR) the chain is Extracellular. Asn-8 is a glycosylation site (N-linked (GlcNAc...) asparagine). Residues 23–43 (LGLWVLSLLYLGAGVPVSLGY) traverse the membrane as a helical segment. At 44 to 64 (NALLVLANLASKNTMTMPDVY) the chain is on the cytoplasmic side. Residues 65-85 (FVNMAVAGLVLTALAPAYLLG) form a helical membrane-spanning segment. Residues 86–101 (PAHSRWALWSLSSEAH) lie on the Extracellular side of the membrane. Residues 102–122 (VTLLILFNVASLVTMYSTALL) traverse the membrane as a helical segment. The Cytoplasmic portion of the chain corresponds to 123-145 (SLDYYIERALPRTYMASVYNTRH). A helical membrane pass occupies residues 146–166 (VCGFVWGGAVLTSFSSLLFYI). Residues 167-188 (CSHVSSRIAECARMQNTEAADA) are Extracellular-facing. Residues 189–209 (ILVLIGYVVPGLAVLYALALI) traverse the membrane as a helical segment. At 210-232 (SRIGKEDTPLDQDTSRLDPSVHR) the chain is on the cytoplasmic side. A helical transmembrane segment spans residues 233 to 253 (LLVATVCTQFGLWTPYYLSLG). The Extracellular portion of the chain corresponds to 254–277 (HTVLTSRGRTVEGHYLGILQVAKD). The helical transmembrane segment at 278-298 (LAKFLAFSSSSVTPLLYRYIN) threads the bilayer. Over 299–333 (KAFPGKLRRLMKKMHCGRRHCSPDPSGIQQVMAQA) the chain is Cytoplasmic.

This sequence belongs to the G-protein coupled receptor 1 family.

The protein localises to the cell membrane. Its function is as follows. GPCR receptor required for the regulation of plasma cholesterol levels. Receptor for CHLSN, a gut derived hormone which mediates an inhibitory effect of intestinal cholesterol absorption on hepatic cholesterol synthesis. Cholesin-binding exerts an antagonistic effect by inhibiting PKA signaling and suppressing SREBF2-controlled cholesterol in the liver. The sequence is that of G-protein coupled receptor 146 (Gpr146) from Mus musculus (Mouse).